Consider the following 426-residue polypeptide: Pyrophosphate--fructose 6-phosphate 1-phosphotransferase 1 (426 aa).

Residue G15 participates in diphosphate binding. D114 lines the Mg(2+) pocket. Residues 140-142 (TID), 186-188 (MGR), E247, and 308-311 (YELR) each bind substrate. The active-site Proton acceptor is the D142.

It belongs to the phosphofructokinase type A (PFKA) family. PPi-dependent PFK group II subfamily. Clade 'Short' sub-subfamily. As to quaternary structure, homotetramer. Mg(2+) is required as a cofactor.

It is found in the cytoplasm. It catalyses the reaction beta-D-fructose 6-phosphate + diphosphate = beta-D-fructose 1,6-bisphosphate + phosphate + H(+). The protein operates within carbohydrate degradation; glycolysis; D-glyceraldehyde 3-phosphate and glycerone phosphate from D-glucose: step 3/4. With respect to regulation, non-allosteric. Functionally, catalyzes the phosphorylation of D-fructose 6-phosphate, the first committing step of glycolysis. Uses inorganic phosphate (PPi) as phosphoryl donor instead of ATP like common ATP-dependent phosphofructokinases (ATP-PFKs), which renders the reaction reversible, and can thus function both in glycolysis and gluconeogenesis. Consistently, PPi-PFK can replace the enzymes of both the forward (ATP-PFK) and reverse (fructose-bisphosphatase (FBPase)) reactions. The sequence is that of Pyrophosphate--fructose 6-phosphate 1-phosphotransferase 1 (Pfk1) from Trichomonas vaginalis (strain ATCC PRA-98 / G3).